Consider the following 212-residue polypeptide: External core antigen (212 aa).

The signal sequence occupies residues 1–19; it reads MQLFHLCLIISCSCPTVQA. Residues 25-27 form an HBEAG region; it reads GWL. The disordered stretch occupies residues 165-212; it reads NAPILSTLPETTVVRRRGRSPRRRTPSPRRRRSQSPRRRRSQSRESQC. The span at 178-205 shows a compositional bias: basic residues; the sequence is VRRRGRSPRRRTPSPRRRRSQSPRRRRS. One copy of the 1; half-length repeat lies at 184 to 190; the sequence is SPRRRTP. A 3 X 8 AA repeats of S-P-R-R-R-R-S-Q region spans residues 184–206; that stretch reads SPRRRTPSPRRRRSQSPRRRRSQ. Residues 184–212 constitute a propeptide that is removed on maturation; sequence SPRRRTPSPRRRRSQSPRRRRSQSRESQC. 2 tandem repeats follow at residues 191-198 and 199-206.

The protein belongs to the orthohepadnavirus precore antigen family. In terms of assembly, homodimerizes. In terms of processing, phosphorylated. Cleaved by host furin.

Its subcellular location is the secreted. The protein localises to the host nucleus. May regulate immune response to the intracellular capsid in acting as a T-cell tolerogen, by having an immunoregulatory effect which prevents destruction of infected cells by cytotoxic T-cells. This immune regulation may predispose to chronicity during perinatal infections and prevent severe liver injury during adult infections. This chain is External core antigen, found in Hepatitis B virus genotype B2 (isolate Indonesia/pIDW420/1988) (HBV-B).